The sequence spans 815 residues: Ent-sandaracopimara-8(14),15-diene synthase, chloroplastic (815 aa).

Residues 1–38 (MLPSSICSMGQIPRTSPHYYGMLPKQMSKGHPPMVTRA) constitute a chloroplast transit peptide. Mg(2+) contacts are provided by D550, D554, N696, T700, and E704. The short motif at 550–554 (DDFFD) is the DDXXD motif element.

The protein belongs to the terpene synthase family. Requires Mg(2+) as cofactor.

The protein localises to the plastid. It localises to the chloroplast. It carries out the reaction ent-copalyl diphosphate = ent-sandaracopimara-8(14),15-diene + diphosphate. It catalyses the reaction 9alpha-copalyl diphosphate = (12E)-9alpha-labda-8(17),12,14-triene + diphosphate. Involved in the biosynthesis of oryzalexin A-F phytoalexins. Catalyzes the conversion of ent-copalyl diphosphate to the phytoalexin precursor ent-sandaracopimaradiene. The polypeptide is Ent-sandaracopimara-8(14),15-diene synthase, chloroplastic (Oryza sativa subsp. japonica (Rice)).